A 115-amino-acid chain; its full sequence is Large ribosomal subunit protein bL19 (115 aa).

Belongs to the bacterial ribosomal protein bL19 family.

Functionally, this protein is located at the 30S-50S ribosomal subunit interface and may play a role in the structure and function of the aminoacyl-tRNA binding site. This is Large ribosomal subunit protein bL19 from Enterobacter sp. (strain 638).